Consider the following 191-residue polypeptide: Large ribosomal subunit protein uL22 (191 aa).

The segment covering 159–168 (VPKGEDDTAQ) has biased composition (basic and acidic residues). The interval 159–191 (VPKGEDDTAQKKKVSQKKLKKQKLKAALSGGAD) is disordered. Basic residues predominate over residues 169–182 (KKKVSQKKLKKQKL).

The protein belongs to the universal ribosomal protein uL22 family.

The sequence is that of Large ribosomal subunit protein uL22 (RPL17) from Suberites domuncula (Sponge).